The sequence spans 107 residues: Urease subunit beta (107 aa).

This sequence belongs to the urease beta subunit family. As to quaternary structure, heterotrimer of UreA (gamma), UreB (beta) and UreC (alpha) subunits. Three heterotrimers associate to form the active enzyme.

The protein resides in the cytoplasm. The catalysed reaction is urea + 2 H2O + H(+) = hydrogencarbonate + 2 NH4(+). It functions in the pathway nitrogen metabolism; urea degradation; CO(2) and NH(3) from urea (urease route): step 1/1. This is Urease subunit beta from Teredinibacter turnerae (strain ATCC 39867 / T7901).